The primary structure comprises 204 residues: Holliday junction branch migration complex subunit RuvA (204 aa).

A domain I region spans residues 1-64 (MIGRLQGILL…EDAHLLFGFA (64 aa)). Positions 65–143 (QKTDRTLFRE…GVKQSDFFVE (79 aa)) are domain II. Residues 144 to 155 (STHIPLSPSIES) are flexible linker. The domain III stretch occupies residues 156-204 (HSESSSDEAISALIALGYKPVEAEKMVKRVAKPELTSEQVIREALKVAL).

The protein belongs to the RuvA family. Homotetramer. Forms an RuvA(8)-RuvB(12)-Holliday junction (HJ) complex. HJ DNA is sandwiched between 2 RuvA tetramers; dsDNA enters through RuvA and exits via RuvB. An RuvB hexamer assembles on each DNA strand where it exits the tetramer. Each RuvB hexamer is contacted by two RuvA subunits (via domain III) on 2 adjacent RuvB subunits; this complex drives branch migration. In the full resolvosome a probable DNA-RuvA(4)-RuvB(12)-RuvC(2) complex forms which resolves the HJ.

The protein resides in the cytoplasm. Functionally, the RuvA-RuvB-RuvC complex processes Holliday junction (HJ) DNA during genetic recombination and DNA repair, while the RuvA-RuvB complex plays an important role in the rescue of blocked DNA replication forks via replication fork reversal (RFR). RuvA specifically binds to HJ cruciform DNA, conferring on it an open structure. The RuvB hexamer acts as an ATP-dependent pump, pulling dsDNA into and through the RuvAB complex. HJ branch migration allows RuvC to scan DNA until it finds its consensus sequence, where it cleaves and resolves the cruciform DNA. In Haemophilus influenzae (strain ATCC 51907 / DSM 11121 / KW20 / Rd), this protein is Holliday junction branch migration complex subunit RuvA.